The primary structure comprises 429 residues: Enolase (429 aa).

(2R)-2-phosphoglycerate is bound at residue glutamine 165. Glutamate 207 functions as the Proton donor in the catalytic mechanism. Mg(2+)-binding residues include aspartate 244, glutamate 287, and aspartate 314. (2R)-2-phosphoglycerate is bound by residues lysine 339, arginine 368, serine 369, and lysine 390. The Proton acceptor role is filled by lysine 339.

Belongs to the enolase family. Mg(2+) is required as a cofactor.

The protein localises to the cytoplasm. It is found in the secreted. It localises to the cell surface. The enzyme catalyses (2R)-2-phosphoglycerate = phosphoenolpyruvate + H2O. The protein operates within carbohydrate degradation; glycolysis; pyruvate from D-glyceraldehyde 3-phosphate: step 4/5. Catalyzes the reversible conversion of 2-phosphoglycerate (2-PG) into phosphoenolpyruvate (PEP). It is essential for the degradation of carbohydrates via glycolysis. In Roseiflexus sp. (strain RS-1), this protein is Enolase.